We begin with the raw amino-acid sequence, 1217 residues long: Rho family-interacting cell polarization regulator 1 (1217 aa).

At S22 the chain carries Phosphoserine. Residues 83 to 112 (RGLTAYLEVHQQEQEKLQRQIKESKRNSRL) adopt a coiled-coil conformation. Phosphoserine is present on residues S345 and S347. T351 is modified (phosphothreonine). A disordered region spans residues 371–413 (NGTAWSLSSESSDDSSSPQLSGTARYSSTPKPLVQQPEPLPVQ). Composition is skewed to low complexity over residues 376-391 (SLSS…PQLS) and 400-413 (PKPL…LPVQ). A phosphoserine mark is found at S452 and S455. A disordered region spans residues 565–762 (TSTTVGSTHK…SPSSIVPEPQ (198 aa)). Positions 579 to 594 (PLTSTGSIPSVTDSIQ) are enriched in polar residues. Low complexity predominate over residues 595-649 (TTTSPTHTTPSPTHTTVSPTHSTPSPTHTTVSPSNAALSPSNATPSLSHSTTSPT). Residues 650–661 (QKATMSTHTTSA) are compositionally biased toward polar residues. The span at 664–695 (PVQTTTSPISTTVSPSPSVDTAIISSSSAVPS) shows a compositional bias: low complexity. Polar residues predominate over residues 720 to 729 (ACTSSPSLAS). S742 carries the post-translational modification Phosphoserine. A coiled-coil region spans residues 786 to 828 (RRLEEALRTLMAALDDYRGQFPELQGLEQEVTRLESLLMQRQG). The segment at 850–874 (FLNDDEDEDNDSPGDRPTSSPEVVA) is disordered. The span at 852 to 861 (NDDEDEDNDS) shows a compositional bias: acidic residues. A phosphoserine mark is found at S868 and S869.

This sequence belongs to the RIPOR family. In terms of assembly, interacts (via N-terminus) with RHOA (GTP-bound form); this interaction links active RHOA to STK24 and STK26 kinases. Interacts with RHOB. Interacts with RHOC. Interacts (via C-terminus) with PDCD10; this interaction occurs in a Rho-independent manner. Interacts (via C-terminus) with STK24; this interaction occurs in a PDCD10-dependent and Rho-independent manner. Interacts (via C-terminus) with STK26; this interaction occurs in a PDCD10-dependent and Rho-independent manner. Interacts (via N-terminus) with 14-3-3 proteins; these interactions occur in a Rho-dependent manner.

The protein resides in the cytoplasm. Its subcellular location is the golgi apparatus. In terms of biological role, downstream effector protein for Rho-type small GTPases that plays a role in cell polarity and directional migration. Acts as an adapter protein, linking active Rho proteins to STK24 and STK26 kinases, and hence positively regulates Golgi reorientation in polarized cell migration upon Rho activation. Involved in the subcellular relocation of STK26 from the Golgi to cytoplasm punctae in a Rho- and PDCD10-dependent manner upon serum stimulation. The protein is Rho family-interacting cell polarization regulator 1 of Rattus norvegicus (Rat).